The following is a 459-amino-acid chain: Serine protease HTRA3 (459 aa).

An N-terminal signal peptide occupies residues 1–23 (MQARALLPATLATLATLAVSVLA). The region spanning 27–90 (PAAPCPARCD…ECVRGVCRCR (64 aa)) is the IGFBP N-terminal domain. Intrachain disulfides connect Cys-31–Cys-54, Cys-35–Cys-56, Cys-40–Cys-57, Cys-45–Cys-60, Cys-68–Cys-82, Cys-76–Cys-87, Cys-89–Cys-107, and Cys-96–Cys-132. One can recognise a Kazal-like domain in the interval 76-134 (CGDSLECVRGVCRCRWTHTVCGTDGHTYADVCALQAASRRALQISGTPVRQLQKGACPS). Residues 181–346 (GSGFIMSEAG…AIPSDRITRF (166 aa)) are serine protease. Active-site charge relay system residues include His-197, Asp-233, and Ser-311. In terms of domain architecture, PDZ spans 365–450 (IRMRTITPSL…EVRRGNDDLL (86 aa)).

The protein belongs to the peptidase S1C family. As to quaternary structure, homotrimer. Interacts with TGFB1; the interaction inhibits TGFB-mediated signaling. Interacts with BMP4; the interaction inhibits BMP4-mediated signaling. Interacts with TGFB2, GDF5 and MYH9. Expressed in the ovary, essentially in granulosa cells in a follicle-stage specific manner. Highest levels found in large luteinizing granulosa cells.

The protein localises to the secreted. In terms of biological role, serine protease that cleaves beta-casein/CSN2 as well as several extracellular matrix (ECM) proteoglycans such as decorin/DCN, biglycan/BGN and fibronectin/FN1. Inhibits signaling mediated by TGF-beta family proteins possibly indirectly by degradation of these ECM proteoglycans. May act as a tumor suppressor. Negatively regulates, in vitro, trophoblast invasion during placental development and may be involved in the development of the placenta in vivo. May also have a role in ovarian development, granulosa cell differentiation and luteinization. The polypeptide is Serine protease HTRA3 (Htra3) (Rattus norvegicus (Rat)).